The primary structure comprises 429 residues: Glutamate-1-semialdehyde 2,1-aminomutase (429 aa).

Lys-267 carries the post-translational modification N6-(pyridoxal phosphate)lysine.

It belongs to the class-III pyridoxal-phosphate-dependent aminotransferase family. HemL subfamily. As to quaternary structure, homodimer. It depends on pyridoxal 5'-phosphate as a cofactor.

The protein resides in the cytoplasm. The enzyme catalyses (S)-4-amino-5-oxopentanoate = 5-aminolevulinate. The protein operates within porphyrin-containing compound metabolism; protoporphyrin-IX biosynthesis; 5-aminolevulinate from L-glutamyl-tRNA(Glu): step 2/2. This chain is Glutamate-1-semialdehyde 2,1-aminomutase, found in Anaeromyxobacter sp. (strain Fw109-5).